Consider the following 242-residue polypeptide: Biosynthetic peptidoglycan transglycosylase (242 aa).

The helical transmembrane segment at 19 to 39 (LMVVLAVFWGGGIALFSVAPV) threads the bilayer.

This sequence belongs to the glycosyltransferase 51 family.

It localises to the cell inner membrane. It catalyses the reaction [GlcNAc-(1-&gt;4)-Mur2Ac(oyl-L-Ala-gamma-D-Glu-L-Lys-D-Ala-D-Ala)](n)-di-trans,octa-cis-undecaprenyl diphosphate + beta-D-GlcNAc-(1-&gt;4)-Mur2Ac(oyl-L-Ala-gamma-D-Glu-L-Lys-D-Ala-D-Ala)-di-trans,octa-cis-undecaprenyl diphosphate = [GlcNAc-(1-&gt;4)-Mur2Ac(oyl-L-Ala-gamma-D-Glu-L-Lys-D-Ala-D-Ala)](n+1)-di-trans,octa-cis-undecaprenyl diphosphate + di-trans,octa-cis-undecaprenyl diphosphate + H(+). The protein operates within cell wall biogenesis; peptidoglycan biosynthesis. In terms of biological role, peptidoglycan polymerase that catalyzes glycan chain elongation from lipid-linked precursors. In Escherichia coli (strain ATCC 8739 / DSM 1576 / NBRC 3972 / NCIMB 8545 / WDCM 00012 / Crooks), this protein is Biosynthetic peptidoglycan transglycosylase.